The chain runs to 361 residues: Peptide chain release factor 1 (361 aa).

Position 238 is an N5-methylglutamine (Q238).

It belongs to the prokaryotic/mitochondrial release factor family. Methylated by PrmC. Methylation increases the termination efficiency of RF1.

Its subcellular location is the cytoplasm. Its function is as follows. Peptide chain release factor 1 directs the termination of translation in response to the peptide chain termination codons UAG and UAA. The polypeptide is Peptide chain release factor 1 (Mesomycoplasma hyopneumoniae (strain 7448) (Mycoplasma hyopneumoniae)).